A 3411-amino-acid polypeptide reads, in one-letter code: Genome polyprotein (3411 aa).

Topologically, residues 1–104 are cytoplasmic; it reads MSGRKAQGKT…LSSRKRRSHD (104 aa). The tract at residues 38–72 is hydrophobic; homodimerization of capsid protein C; it reads PGPSRGVQGFIFFFLFNILTGKKITAHLKRLWKML. Residues 102-121 constitute a propeptide, ER anchor for the capsid protein C, removed in mature form by serine protease NS3; the sequence is SHDVLTVQFLILGMLLMTGG. A helical membrane pass occupies residues 105–125; sequence VLTVQFLILGMLLMTGGVTLV. Residues 126-244 are Extracellular-facing; sequence RKNRWLLLNV…GERQLQKIER (119 aa). Residues N134 and N150 are each glycosylated (N-linked (GlcNAc...) asparagine; by host). A helical membrane pass occupies residues 245-265; sequence WFVRNPFFAVTALTIAYLVGS. Over 266–270 the chain is Cytoplasmic; that stretch reads NMTQR. A helical transmembrane segment spans residues 271-285; sequence VVIALLVLAVGPAYS. Over 286 to 730 the chain is Extracellular; the sequence is AHCIGITDRD…TVFGSAFQGL (445 aa). Cystine bridges form between C288–C315, C345–C401, C345–C406, C359–C390, C377–C401, C377–C406, C467–C568, and C585–C615. A fusion peptide region spans residues 383–396; that stretch reads DRGWGNGCGLFGKG. Residues 731–751 form a helical membrane-spanning segment; the sequence is FGGLNWITKVIMGAVLIWVGI. Residues 752–757 lie on the Extracellular side of the membrane; it reads NTRNMT. Residues 758-778 traverse the membrane as a helical segment; the sequence is MSMSMILVGVIMMFLSLGVGA. The Extracellular segment spans residues 779-1132; it reads DQGCAINFGK…LVRSWVTAGE (354 aa). Disulfide bonds link C782/C793, C833/C921, C957/C1002, C1058/C1107, C1069/C1091, and C1090/C1094. Residues N908 and N986 are each glycosylated (N-linked (GlcNAc...) asparagine; by host). A helical membrane pass occupies residues 1133–1153; the sequence is IHAVPFGLVSMMIAMEVVLRK. The Cytoplasmic portion of the chain corresponds to 1154-1201; it reads RQGPKQMLVGGVVLLGAMLVGQVTLLDLLKLTVAVGLHFHEMNNGGDA. Residues 1202-1222 traverse the membrane as a helical segment; sequence MYMALIAAFSIRPGLLIGFGL. Residues 1223–1287 are Lumenal-facing; it reads RTLWSPRERL…ILPLMALLTP (65 aa). The chain crosses the membrane as a helical span at residues 1288–1308; sequence VTMAEVRLAAMFFCAVVIIGV. The Cytoplasmic portion of the chain corresponds to 1309 to 1355; sequence LHQNFKDTSMQKTIPLVALTLTSYLGLTQPFLGLCAFLATRIFGRRS. The chain crosses the membrane as a helical span at residues 1356–1376; that stretch reads IPVNEALAAAGLVGVLAGLAF. The Lumenal segment spans residues 1377-1378; that stretch reads QE. Residues 1379 to 1399 form a helical membrane-spanning segment; it reads MENFLGPIAVGGLLMMLVSVA. Over 1400–1456 the chain is Cytoplasmic; the sequence is GRVDGLELKKLGEVSWEEEAEISGSSARYDVALSEQGEFKLLSEEKVPWDQVVMTSL. The tract at residues 1407–1446 is interacts with and activates NS3 protease; the sequence is LKKLGEVSWEEEAEISGSSARYDVALSEQGEFKLLSEEKV. The helical intramembrane region spans 1457–1477; that stretch reads ALVGAALHPFALLLVLAGWLF. Residues 1478 to 2157 lie on the Cytoplasmic side of the membrane; that stretch reads HVRGARRSGD…RNALSMMPEA (680 aa). In terms of domain architecture, Peptidase S7 spans 1485–1665; sequence SGDVLWDIPT…EVKEEGKEEL (181 aa). Residues H1537, D1561, and S1622 each act as charge relay system; for serine protease NS3 activity in the active site. Residues 1669–1825 enclose the Helicase ATP-binding domain; the sequence is PTMLKKGMTT…HSNGEIEDVQ (157 aa). An important for RNA-binding region spans residues 1673–1676; it reads KKGM. 1682–1689 contributes to the ATP binding site; the sequence is FHPGAGKT. The DEAH box motif lies at 1773–1776; that stretch reads DEAH. Residues 1820–1997 form the Helicase C-terminal domain; the sequence is EIEDVQTDIP…VRGGMVAPLY (178 aa). At K1877 the chain carries N6-acetyllysine; by host. Residues 2158-2178 form a helical membrane-spanning segment; the sequence is MTIVMLFILAGLLTSGMVIFF. The Lumenal portion of the chain corresponds to 2179–2186; it reads MSPKGISR. Residues 2187–2207 constitute an intramembrane region (helical); it reads MSMAMGTMAGCGYLMFLGGVK. The Lumenal segment spans residues 2208–2209; that stretch reads PT. A helical membrane pass occupies residues 2210-2230; the sequence is HISYVMLIFFVLMVVVIPEPG. Topologically, residues 2231–2241 are cytoplasmic; the sequence is QQRSIQDNQVA. Residues 2242-2262 form a helical membrane-spanning segment; that stretch reads YLIIGILTLVSAVAANELGML. Residues 2263–2293 lie on the Lumenal side of the membrane; it reads EKTKEDLFGKKNLIPSSASPWSWPDLDLKPG. Positions 2294–2314 form an intramembrane region, helical; it reads AAWTVYVGIVTMLSPMLHHWI. Over 2315 to 2360 the chain is Lumenal; it reads KVEYGNLSLSGIAQSASVLSFMDKGIPFMKMNISVIMLLVSGWNSI. The chain crosses the membrane as a helical span at residues 2361–2381; that stretch reads TVMPLLCGIGCAMLHWSLILP. The Cytoplasmic segment spans residues 2382-2421; the sequence is GIKAQQSKLAQRRVFHGVAENPVVDGNPTVDIEEAPEMPA. Residues 2422–2442 form a helical membrane-spanning segment; it reads LYEKKLALYLLLALSLASVAM. The Lumenal segment spans residues 2443–2445; it reads CRT. Residues 2446–2466 traverse the membrane as a helical segment; sequence PFSLAEGIVLASAALGPLIEG. Residues 2467-3411 lie on the Cytoplasmic side of the membrane; sequence NTSLLWNGPM…DADLQLGELI (945 aa). Positions 2507–2771 constitute an mRNA cap 0-1 NS5-type MT domain; that stretch reads GSANGKTLGE…DVILPIGTRS (265 aa). S2562 contacts S-adenosyl-L-methionine. A Phosphoserine modification is found at S2562. K2567 functions as the For 2'-O-MTase activity in the catalytic mechanism. Positions 2592, 2593, 2610, 2611, 2637, and 2638 each coordinate S-adenosyl-L-methionine. D2652 (for 2'-O-MTase activity) is an active-site residue. Residue I2653 coordinates S-adenosyl-L-methionine. Residues K2688 and E2724 each act as for 2'-O-MTase activity in the active site. Y2726 contributes to the S-adenosyl-L-methionine binding site. The short motif at 2878-2911 is the Nuclear localization signal element; it reads RKIMKVVNRWLFRHLAREKNPRLCTKEEFIAKVR. Zn(2+)-binding residues include E2945, H2949, C2954, and C2957. Residues 3035–3187 enclose the RdRp catalytic domain; it reads GGFYADDTAG…RPIDDRFGLA (153 aa). Residues H3222, C3238, and C3357 each coordinate Zn(2+).

It in the N-terminal section; belongs to the class I-like SAM-binding methyltransferase superfamily. mRNA cap 0-1 NS5-type methyltransferase family. As to quaternary structure, homodimer. Interacts (via N-terminus) with host EXOC1 (via C-terminus); this interaction results in EXOC1 degradation through the proteasome degradation pathway. In terms of assembly, forms heterodimers with envelope protein E in the endoplasmic reticulum and Golgi. Homodimer; in the endoplasmic reticulum and Golgi. Interacts with protein prM. Interacts with non-structural protein 1. As to quaternary structure, homodimer; Homohexamer when secreted. Interacts with envelope protein E. In terms of assembly, interacts (via N-terminus) with serine protease NS3. Forms a heterodimer with serine protease NS3. May form homooligomers. As to quaternary structure, forms a heterodimer with NS2B. Interacts with non-structural protein 2A (via N-terminus). Interacts with NS4B. Interacts with unphosphorylated RNA-directed RNA polymerase NS5; this interaction stimulates RNA-directed RNA polymerase NS5 guanylyltransferase activity. NS3 interacts with host PDCD6IP; this interaction contributes to virion release. In terms of assembly, interacts with serine protease NS3. Homodimer. Interacts with host STAT2; this interaction prevents the establishment of cellular antiviral state. Interacts with serine protease NS3. Interacts with host TRIM23; this interaction leads to NS5 ubiquitination. In terms of processing, specific enzymatic cleavages in vivo yield mature proteins. The nascent capsid protein C contains a C-terminal hydrophobic domain that act as a signal sequence for translocation of prM into the lumen of the ER. Mature capsid protein C is cleaved at a site upstream of this hydrophobic domain by NS3. prM is cleaved in post-Golgi vesicles by a host furin, releasing the mature small envelope protein M, and peptide pr. Non-structural protein 2A-alpha, a C-terminally truncated form of non-structural protein 2A, results from partial cleavage by NS3. Specific enzymatic cleavages in vivo yield mature proteins peptide 2K acts as a signal sequence and is removed from the N-terminus of NS4B by the host signal peptidase in the ER lumen. Signal cleavage at the 2K-4B site requires a prior NS3 protease-mediated cleavage at the 4A-2K site. Cleaved in post-Golgi vesicles by a host furin, releasing the mature small envelope protein M, and peptide pr. This cleavage is incomplete as up to 30% of viral particles still carry uncleaved prM. Post-translationally, N-glycosylated. In terms of processing, N-glycosylated. The excreted form is glycosylated and this is required for efficient secretion of the protein from infected cells. Polyubiquitinated; ubiquitination is probably mediated by host TRIM23 and is prerequisite for NS5-STAT2 interaction. NS5 is not ISGylated or sumoylated. Post-translationally, acetylated by host KAT5. Acetylation modulates NS3 RNA-binding and unwinding activities and plays an important positive role for viral replication. In terms of processing, phosphorylated on serines residues. This phosphorylation may trigger NS5 nuclear localization.

Its subcellular location is the virion. It localises to the host nucleus. It is found in the host cytoplasm. The protein localises to the host perinuclear region. The protein resides in the secreted. Its subcellular location is the virion membrane. It localises to the host endoplasmic reticulum membrane. The catalysed reaction is Selective hydrolysis of -Xaa-Xaa-|-Yaa- bonds in which each of the Xaa can be either Arg or Lys and Yaa can be either Ser or Ala.. It catalyses the reaction RNA(n) + a ribonucleoside 5'-triphosphate = RNA(n+1) + diphosphate. It carries out the reaction a ribonucleoside 5'-triphosphate + H2O = a ribonucleoside 5'-diphosphate + phosphate + H(+). The enzyme catalyses ATP + H2O = ADP + phosphate + H(+). The catalysed reaction is a 5'-end (5'-triphosphoguanosine)-ribonucleoside in mRNA + S-adenosyl-L-methionine = a 5'-end (N(7)-methyl 5'-triphosphoguanosine)-ribonucleoside in mRNA + S-adenosyl-L-homocysteine. It catalyses the reaction a 5'-end (N(7)-methyl 5'-triphosphoguanosine)-ribonucleoside in mRNA + S-adenosyl-L-methionine = a 5'-end (N(7)-methyl 5'-triphosphoguanosine)-(2'-O-methyl-ribonucleoside) in mRNA + S-adenosyl-L-homocysteine + H(+). Plays a role in virus budding by binding to the cell membrane and gathering the viral RNA into a nucleocapsid that forms the core of a mature virus particle. During virus entry, may induce genome penetration into the host cytoplasm after hemifusion induced by the surface proteins. Can migrate to the cell nucleus where it modulates host functions. Functionally, inhibits RNA silencing by interfering with host Dicer. Its function is as follows. Prevents premature fusion activity of envelope proteins in trans-Golgi by binding to envelope protein E at pH6.0. After virion release in extracellular space, gets dissociated from E dimers. In terms of biological role, acts as a chaperone for envelope protein E during intracellular virion assembly by masking and inactivating envelope protein E fusion peptide. prM is the only viral peptide matured by host furin in the trans-Golgi network probably to avoid catastrophic activation of the viral fusion activity in acidic Golgi compartment prior to virion release. prM-E cleavage is inefficient, and many virions are only partially matured. These uncleaved prM would play a role in immune evasion. May play a role in virus budding. Exerts cytotoxic effects by activating a mitochondrial apoptotic pathway through M ectodomain. May display a viroporin activity. Functionally, binds to host cell surface receptor and mediates fusion between viral and cellular membranes. Envelope protein is synthesized in the endoplasmic reticulum in the form of heterodimer with protein prM. They play a role in virion budding in the ER, and the newly formed immature particle is covered with 60 spikes composed of heterodimer between precursor prM and envelope protein E. The virion is transported to the Golgi apparatus where the low pH causes dissociation of PrM-E heterodimers and formation of E homodimers. prM-E cleavage is inefficient, and many virions are only partially matured. These uncleaved prM would play a role in immune evasion. Its function is as follows. Involved in immune evasion, pathogenesis and viral replication. Once cleaved off the polyprotein, is targeted to three destinations: the viral replication cycle, the plasma membrane and the extracellular compartment. Essential for viral replication. Required for formation of the replication complex and recruitment of other non-structural proteins to the ER-derived membrane structures. Excreted as a hexameric lipoparticle that plays a role against host immune response. Antagonizing the complement function. Binds to the host macrophages and dendritic cells. Inhibits signal transduction originating from Toll-like receptor 3 (TLR3). In terms of biological role, component of the viral RNA replication complex that functions in virion assembly and antagonizes the host immune response. Required cofactor for the serine protease function of NS3. May have membrane-destabilizing activity and form viroporins. Functionally, displays three enzymatic activities: serine protease, NTPase and RNA helicase. NS3 serine protease, in association with NS2B, performs its autocleavage and cleaves the polyprotein at dibasic sites in the cytoplasm: C-prM, NS2A-NS2B, NS2B-NS3, NS3-NS4A, NS4A-2K and NS4B-NS5. NS3 RNA helicase binds RNA and unwinds dsRNA in the 3' to 5' direction. Also plays a role in virus assembly. Its function is as follows. Regulates the ATPase activity of the NS3 helicase activity. NS4A allows NS3 helicase to conserve energy during unwinding. In terms of biological role, functions as a signal peptide for NS4B and is required for the interferon antagonism activity of the latter. Induces the formation of ER-derived membrane vesicles where the viral replication takes place. Inhibits interferon (IFN)-induced host STAT1 phosphorylation and nuclear translocation, thereby preventing the establishment of cellular antiviral state by blocking the IFN-alpha/beta pathway. Functionally, replicates the viral (+) and (-) RNA genome, and performs the capping of genomes in the cytoplasm. NS5 methylates viral RNA cap at guanine N-7 and ribose 2'-O positions. Besides its role in RNA genome replication, also prevents the establishment of cellular antiviral state by blocking the interferon-alpha/beta (IFN-alpha/beta) signaling pathway. IFN-I induces binding of NS5 to host IFN-activated transcription factor STAT2, preventing its transcriptional activity. Host TRIM23 is the E3 ligase that interacts with and polyubiquitinates NS5 to promote its binding to STAT2 and trigger IFN-I signaling inhibition. The chain is Genome polyprotein from Aedes aegypti (Yellowfever mosquito).